A 498-amino-acid polypeptide reads, in one-letter code: ATP synthase subunit beta, chloroplastic (498 aa).

Position 172-179 (172-179 (GGAGVGKT)) interacts with ATP.

The protein belongs to the ATPase alpha/beta chains family. As to quaternary structure, F-type ATPases have 2 components, CF(1) - the catalytic core - and CF(0) - the membrane proton channel. CF(1) has five subunits: alpha(3), beta(3), gamma(1), delta(1), epsilon(1). CF(0) has four main subunits: a(1), b(1), b'(1) and c(9-12).

The protein localises to the plastid. It is found in the chloroplast thylakoid membrane. The catalysed reaction is ATP + H2O + 4 H(+)(in) = ADP + phosphate + 5 H(+)(out). Functionally, produces ATP from ADP in the presence of a proton gradient across the membrane. The catalytic sites are hosted primarily by the beta subunits. In Galbulimima belgraveana (Northern pigeonberry ash), this protein is ATP synthase subunit beta, chloroplastic.